A 436-amino-acid chain; its full sequence is Adenylosuccinate synthetase (436 aa).

GTP-binding positions include Gly12–Lys18 and Gly40–Thr42. Catalysis depends on Asp13, which acts as the Proton acceptor. Positions 13 and 40 each coordinate Mg(2+). IMP is bound by residues Asp13–Lys16, Asn38–His41, Thr128, Arg142, Gln223, Thr238, and Arg302. Catalysis depends on His41, which acts as the Proton donor. Thr298–Arg304 lines the substrate pocket. GTP contacts are provided by residues Arg304, Lys330–Asp332, and Ser412–Gly414.

Belongs to the adenylosuccinate synthetase family. In terms of assembly, homodimer. Requires Mg(2+) as cofactor.

Its subcellular location is the cytoplasm. It catalyses the reaction IMP + L-aspartate + GTP = N(6)-(1,2-dicarboxyethyl)-AMP + GDP + phosphate + 2 H(+). The protein operates within purine metabolism; AMP biosynthesis via de novo pathway; AMP from IMP: step 1/2. Its function is as follows. Plays an important role in the de novo pathway of purine nucleotide biosynthesis. Catalyzes the first committed step in the biosynthesis of AMP from IMP. The chain is Adenylosuccinate synthetase from Prochlorococcus marinus subsp. pastoris (strain CCMP1986 / NIES-2087 / MED4).